The chain runs to 121 residues: Large ribosomal subunit protein uL14c (121 aa).

The protein belongs to the universal ribosomal protein uL14 family. As to quaternary structure, part of the 50S ribosomal subunit.

It localises to the plastid. It is found in the apicoplast. Binds to 23S rRNA. This chain is Large ribosomal subunit protein uL14c (rpl14), found in Toxoplasma gondii.